A 257-amino-acid chain; its full sequence is Phycoerythrobilin:ferredoxin oxidoreductase (257 aa).

The protein belongs to the HY2 family.

The enzyme catalyses (3Z)-phycoerythrobilin + oxidized 2[4Fe-4S]-[ferredoxin] = 15,16-dihydrobiliverdin + reduced 2[4Fe-4S]-[ferredoxin] + 2 H(+). In terms of biological role, catalyzes the two-electron reduction of the C2 and C3(1) diene system of 15,16-dihydrobiliverdin. The chain is Phycoerythrobilin:ferredoxin oxidoreductase (pebB) from Prochlorococcus marinus (strain SARG / CCMP1375 / SS120).